Here is a 147-residue protein sequence, read N- to C-terminus: Hemoglobin subunit epsilon-1 (147 aa).

The 145-residue stretch at 3–147 folds into the Globin domain; that stretch reads HFTAEEKAAI…VATALAHKYH (145 aa). 2 residues coordinate heme b: His-64 and His-93.

It belongs to the globin family. As to quaternary structure, heterotetramer of two epsilon chains and two alpha chains. As to expression, red blood cells.

Functionally, beta-type chain found in early embryos. This chain is Hemoglobin subunit epsilon-1 (HBE1), found in Capra hircus (Goat).